We begin with the raw amino-acid sequence, 3919 residues long: Intermembrane lipid transfer protein Vps13D (3919 aa).

In terms of domain architecture, Chorein N-terminal spans 4–114; it reads DLITWVLNTY…QDLEYKLAVL (111 aa). The interval 706–736 is disordered; that stretch reads TSDDDETYLTPCSTPPASEKSGSESPTLLEN. The region spanning 2292–2334 is the UBA domain; it reads KADSDLEKAAPLVAMGFEISDCLYAMQINNWRINDAAIWLSQQ. The SHR-BD domain maps to 2837 to 3113; it reads ELYISAPVWI…YVMDDPLGQQ (277 aa). A disordered region spans residues 3749–3768; the sequence is VRETSRDSHRNAPERKRLPR. Residues 3751 to 3764 show a composition bias toward basic and acidic residues; sequence ETSRDSHRNAPERK.

The protein belongs to the VPS13 family. Expressed in intestinal cells (at protein level).

The protein localises to the cytoplasm. The protein resides in the lysosome. Functionally, mediates the transfer of lipids between membranes at organelle contact sites. Functions in promoting mitochondrial clearance by mitochondrial autophagy (mitophagy), also possibly by positively regulating mitochondrial fission. Mitophagy plays an important role in regulating cell health and mitochondrial size and homeostasis. This Drosophila melanogaster (Fruit fly) protein is Intermembrane lipid transfer protein Vps13D.